The following is a 252-amino-acid chain: Chitooligosaccharide deacetylase (252 aa).

2 residues coordinate Mg(2+): His61 and His125.

It belongs to the YdjC deacetylase family. ChbG subfamily. As to quaternary structure, homodimer. The cofactor is Mg(2+).

It is found in the cytoplasm. The catalysed reaction is N,N'-diacetylchitobiose + H2O = N-acetyl-beta-D-glucosaminyl-(1-&gt;4)-D-glucosamine + acetate. It catalyses the reaction diacetylchitobiose-6'-phosphate + H2O = N'-monoacetylchitobiose-6'-phosphate + acetate. It functions in the pathway glycan degradation; chitin degradation. Involved in the degradation of chitin. ChbG is essential for growth on the acetylated chitooligosaccharides chitobiose and chitotriose but is dispensable for growth on cellobiose and chitosan dimer, the deacetylated form of chitobiose. Deacetylation of chitobiose-6-P and chitotriose-6-P is necessary for both the activation of the chb promoter by the regulatory protein ChbR and the hydrolysis of phosphorylated beta-glucosides by the phospho-beta-glucosidase ChbF. Catalyzes the removal of only one acetyl group from chitobiose-6-P to yield monoacetylchitobiose-6-P, the inducer of ChbR and the substrate of ChbF. In Citrobacter koseri (strain ATCC BAA-895 / CDC 4225-83 / SGSC4696), this protein is Chitooligosaccharide deacetylase.